Here is a 429-residue protein sequence, read N- to C-terminus: Adenylosuccinate synthetase (429 aa).

GTP is bound by residues 12–18 (GDEGKGK) and 40–42 (GHT). The active-site Proton acceptor is Asp13. Residues Asp13 and Gly40 each coordinate Mg(2+). IMP contacts are provided by residues 13-16 (DEGK), 38-41 (NAGH), Thr129, Arg143, Gln224, Thr239, and Arg303. His41 functions as the Proton donor in the catalytic mechanism. 299–305 (VTTGRAR) provides a ligand contact to substrate. Residues Arg305, 331 to 333 (KLD), and 413 to 415 (GVG) each bind GTP.

The protein belongs to the adenylosuccinate synthetase family. As to quaternary structure, homodimer. Mg(2+) is required as a cofactor.

Its subcellular location is the cytoplasm. The catalysed reaction is IMP + L-aspartate + GTP = N(6)-(1,2-dicarboxyethyl)-AMP + GDP + phosphate + 2 H(+). It participates in purine metabolism; AMP biosynthesis via de novo pathway; AMP from IMP: step 1/2. Its function is as follows. Plays an important role in the de novo pathway of purine nucleotide biosynthesis. Catalyzes the first committed step in the biosynthesis of AMP from IMP. The sequence is that of Adenylosuccinate synthetase from Rhodococcus jostii (strain RHA1).